Consider the following 417-residue polypeptide: uncharacterized protein (417 aa).

Disordered stretches follow at residues 1 to 41 (MDSE…EDQA) and 233 to 262 (QDSA…STRS). A compositionally biased stretch (basic and acidic residues) spans 31–41 (DEDHIFHEDQA). Residues 235-245 (SAYNDQAPSTS) show a composition bias toward polar residues.

This is an uncharacterized protein from Caenorhabditis elegans.